We begin with the raw amino-acid sequence, 258 residues long: UPF0246 protein YaaA (258 aa).

It belongs to the UPF0246 family.

The protein is UPF0246 protein YaaA of Escherichia coli O127:H6 (strain E2348/69 / EPEC).